Consider the following 488-residue polypeptide: MPRTRTPLAAIVLAAGKGTRMKSNKAKVLHEVAGRPLAYYPVKRALELGASPVVVVVGHQAEAVEAALSAALPEAPLRFAVQEQQLGTAHAVLAAKRALRGYRGPVLILSGDTPLLRAETLEAVVSAGRRARAAVSLATMTLEVPRGYGRVVRDARGRPARIVEEKDATEAERAVREVNAGLYCVDAELLWKKLAKVGTANAQREFYLTDLVPMAAQAGGVAGVEVPAEEASGVNDRVELSRANRVMVGRLAEAFMRAGVTIEDPARFDCDEGVEIGADAVIEPNVRLRGRTRVGARTRVGVGAVITDGVLADGVTVNPYTVISEAQVAEGAILGPFSRLRPGADIGPEAHVGNFVEVKKSRLGKGAKANHLAYLGDAEIGAGANIGAGTITCNYDGERKNPTRIGEGAFIGSDSILVAPIEIGAGAYVAAGSTLTDPVPAGALALGRARQVTKEGWVAQRQAEKQMKGTATGPASARKGRPAARRAS.

Positions 1–237 (MPRTRTPLAA…AEEASGVNDR (237 aa)) are pyrophosphorylase. Residues 13–16 (LAAG), Lys-27, Gln-82, 87–88 (GT), 110–112 (SGD), Gly-149, Glu-164, Asn-179, and Asn-235 each bind UDP-N-acetyl-alpha-D-glucosamine. Asp-112 is a binding site for Mg(2+). Residue Asn-235 participates in Mg(2+) binding. The linker stretch occupies residues 238–258 (VELSRANRVMVGRLAEAFMRA). Positions 259–488 (GVTIEDPARF…KGRPAARRAS (230 aa)) are N-acetyltransferase. Positions 341 and 359 each coordinate UDP-N-acetyl-alpha-D-glucosamine. His-371 functions as the Proton acceptor in the catalytic mechanism. 2 residues coordinate UDP-N-acetyl-alpha-D-glucosamine: Tyr-374 and Asn-385. Acetyl-CoA is bound by residues Ala-388, 394-395 (NY), Ser-413, Ala-431, and Arg-448. The interval 459–488 (AQRQAEKQMKGTATGPASARKGRPAARRAS) is disordered. Residues 478–488 (RKGRPAARRAS) are compositionally biased toward basic residues.

It in the N-terminal section; belongs to the N-acetylglucosamine-1-phosphate uridyltransferase family. The protein in the C-terminal section; belongs to the transferase hexapeptide repeat family. In terms of assembly, homotrimer. The cofactor is Mg(2+).

The protein localises to the cytoplasm. It catalyses the reaction alpha-D-glucosamine 1-phosphate + acetyl-CoA = N-acetyl-alpha-D-glucosamine 1-phosphate + CoA + H(+). The catalysed reaction is N-acetyl-alpha-D-glucosamine 1-phosphate + UTP + H(+) = UDP-N-acetyl-alpha-D-glucosamine + diphosphate. It participates in nucleotide-sugar biosynthesis; UDP-N-acetyl-alpha-D-glucosamine biosynthesis; N-acetyl-alpha-D-glucosamine 1-phosphate from alpha-D-glucosamine 6-phosphate (route II): step 2/2. The protein operates within nucleotide-sugar biosynthesis; UDP-N-acetyl-alpha-D-glucosamine biosynthesis; UDP-N-acetyl-alpha-D-glucosamine from N-acetyl-alpha-D-glucosamine 1-phosphate: step 1/1. Its pathway is bacterial outer membrane biogenesis; LPS lipid A biosynthesis. Catalyzes the last two sequential reactions in the de novo biosynthetic pathway for UDP-N-acetylglucosamine (UDP-GlcNAc). The C-terminal domain catalyzes the transfer of acetyl group from acetyl coenzyme A to glucosamine-1-phosphate (GlcN-1-P) to produce N-acetylglucosamine-1-phosphate (GlcNAc-1-P), which is converted into UDP-GlcNAc by the transfer of uridine 5-monophosphate (from uridine 5-triphosphate), a reaction catalyzed by the N-terminal domain. This Anaeromyxobacter dehalogenans (strain 2CP-1 / ATCC BAA-258) protein is Bifunctional protein GlmU.